A 227-amino-acid polypeptide reads, in one-letter code: Probable methylthioribulose-1-phosphate dehydratase (227 aa).

Cys87 lines the substrate pocket. Residues His105 and His107 each coordinate Zn(2+). Glu129 (proton donor/acceptor) is an active-site residue. His185 is a Zn(2+) binding site.

It belongs to the aldolase class II family. MtnB subfamily. Requires Zn(2+) as cofactor.

The protein localises to the cytoplasm. The catalysed reaction is 5-(methylsulfanyl)-D-ribulose 1-phosphate = 5-methylsulfanyl-2,3-dioxopentyl phosphate + H2O. Its pathway is amino-acid biosynthesis; L-methionine biosynthesis via salvage pathway; L-methionine from S-methyl-5-thio-alpha-D-ribose 1-phosphate: step 2/6. Catalyzes the dehydration of methylthioribulose-1-phosphate (MTRu-1-P) into 2,3-diketo-5-methylthiopentyl-1-phosphate (DK-MTP-1-P). The sequence is that of Probable methylthioribulose-1-phosphate dehydratase from Drosophila mojavensis (Fruit fly).